The chain runs to 237 residues: MTDHSSDKTALVLFSGGQDSATCLAWALARFARVETIGFDYGQRHLIELECRARLLDGFRAISDDWAAKLGDNHTLTIPTLAEISDTALTRDVAIAMGADGLPNTFVPGRNLIFLNFAAALAYRRGITDIVGGMCETDYSGYPDCRNDTIQALQTALSLGMARDITLHTPLMWRDKAATWQLAQDLGGDALVDLIREDSHTCYLGERGARHDWGYGCGECPACRLRAKGWIEYASGI.

Residue 14–24 participates in ATP binding; it reads FSGGQDSATCL. Cysteine 202, cysteine 217, cysteine 220, and cysteine 223 together coordinate Zn(2+).

Belongs to the QueC family. Requires Zn(2+) as cofactor.

It catalyses the reaction 7-carboxy-7-deazaguanine + NH4(+) + ATP = 7-cyano-7-deazaguanine + ADP + phosphate + H2O + H(+). It functions in the pathway purine metabolism; 7-cyano-7-deazaguanine biosynthesis. In terms of biological role, catalyzes the ATP-dependent conversion of 7-carboxy-7-deazaguanine (CDG) to 7-cyano-7-deazaguanine (preQ(0)). The sequence is that of 7-cyano-7-deazaguanine synthase from Rhodopseudomonas palustris (strain ATCC BAA-98 / CGA009).